The primary structure comprises 286 residues: Thiamine-monophosphate kinase (286 aa).

Residues Asp22, Ser36, Thr37, and Asp38 each coordinate Mg(2+). Position 45 (Asp45) interacts with substrate. Residues Asp66 and Asp111 each contribute to the Mg(2+) site. Residues 110–111 and Arg136 each bind ATP; that span reads GD. Residue Asp191 participates in Mg(2+) binding. An ATP-binding site is contributed by Ser193. Residue Asp194 coordinates Mg(2+). Tyr282 is a binding site for substrate.

This sequence belongs to the thiamine-monophosphate kinase family.

The catalysed reaction is thiamine phosphate + ATP = thiamine diphosphate + ADP. It functions in the pathway cofactor biosynthesis; thiamine diphosphate biosynthesis; thiamine diphosphate from thiamine phosphate: step 1/1. Catalyzes the ATP-dependent phosphorylation of thiamine-monophosphate (TMP) to form thiamine-pyrophosphate (TPP), the active form of vitamin B1. The chain is Thiamine-monophosphate kinase from Methanospirillum hungatei JF-1 (strain ATCC 27890 / DSM 864 / NBRC 100397 / JF-1).